We begin with the raw amino-acid sequence, 426 residues long: Serine--tRNA ligase (426 aa).

233–235 (TAE) is a binding site for L-serine. Residue 264-266 (RSE) coordinates ATP. Residue E287 participates in L-serine binding. Residue 351–354 (EISS) coordinates ATP. Residue S387 participates in L-serine binding.

It belongs to the class-II aminoacyl-tRNA synthetase family. Type-1 seryl-tRNA synthetase subfamily. Homodimer. The tRNA molecule binds across the dimer.

The protein resides in the cytoplasm. The enzyme catalyses tRNA(Ser) + L-serine + ATP = L-seryl-tRNA(Ser) + AMP + diphosphate + H(+). It catalyses the reaction tRNA(Sec) + L-serine + ATP = L-seryl-tRNA(Sec) + AMP + diphosphate + H(+). The protein operates within aminoacyl-tRNA biosynthesis; selenocysteinyl-tRNA(Sec) biosynthesis; L-seryl-tRNA(Sec) from L-serine and tRNA(Sec): step 1/1. Functionally, catalyzes the attachment of serine to tRNA(Ser). Is also able to aminoacylate tRNA(Sec) with serine, to form the misacylated tRNA L-seryl-tRNA(Sec), which will be further converted into selenocysteinyl-tRNA(Sec). This chain is Serine--tRNA ligase, found in Pseudomonas syringae pv. tomato (strain ATCC BAA-871 / DC3000).